Reading from the N-terminus, the 258-residue chain is Peroxisomal membrane protein 11B (258 aa).

The residue at position 43 (Lys43) is an N6-acetyllysine. An interaction with PEX19, PEX11G and FIS1 and peroxisome targeting region spans residues 210–258 (VVRNACDLFIPLDKLGLWRCGPGIVGLCGLVSSILSILTLICPWLRLKP). A helical transmembrane segment spans residues 232–254 (GIVGLCGLVSSILSILTLICPWL).

It belongs to the peroxin-11 family. In terms of assembly, homodimer. Heterodimer with PEX11G. Interacts with PEX19. Interacts with FIS1.

The protein resides in the peroxisome membrane. Involved in peroxisomal proliferation. May regulate peroxisome division by recruiting the dynamin-related GTPase DNM1L to the peroxisomal membrane. Promotes membrane protrusion and elongation on the peroxisomal surface. In Bos taurus (Bovine), this protein is Peroxisomal membrane protein 11B (PEX11B).